We begin with the raw amino-acid sequence, 96 residues long: Co-chaperonin GroES (96 aa).

It belongs to the GroES chaperonin family. As to quaternary structure, heptamer of 7 subunits arranged in a ring. Interacts with the chaperonin GroEL.

Its subcellular location is the cytoplasm. Its function is as follows. Together with the chaperonin GroEL, plays an essential role in assisting protein folding. The GroEL-GroES system forms a nano-cage that allows encapsulation of the non-native substrate proteins and provides a physical environment optimized to promote and accelerate protein folding. GroES binds to the apical surface of the GroEL ring, thereby capping the opening of the GroEL channel. The chain is Co-chaperonin GroES from Streptococcus pyogenes serotype M18 (strain MGAS8232).